The following is a 98-amino-acid chain: uncharacterized protein (98 aa).

This sequence belongs to the HesB/IscA family.

This is an uncharacterized protein from Staphylococcus saprophyticus subsp. saprophyticus (strain ATCC 15305 / DSM 20229 / NCIMB 8711 / NCTC 7292 / S-41).